Consider the following 398-residue polypeptide: Acetate kinase (398 aa).

Asn7 provides a ligand contact to Mg(2+). Lys14 provides a ligand contact to ATP. Arg91 serves as a coordination point for substrate. The active-site Proton donor/acceptor is Asp148. ATP contacts are provided by residues 208 to 212, 282 to 284, and 330 to 334; these read HLGNG, DFR, and GVGEN. Residue Glu383 coordinates Mg(2+).

This sequence belongs to the acetokinase family. Homodimer. Requires Mg(2+) as cofactor. It depends on Mn(2+) as a cofactor.

The protein resides in the cytoplasm. It carries out the reaction acetate + ATP = acetyl phosphate + ADP. The protein operates within metabolic intermediate biosynthesis; acetyl-CoA biosynthesis; acetyl-CoA from acetate: step 1/2. In terms of biological role, catalyzes the formation of acetyl phosphate from acetate and ATP. Can also catalyze the reverse reaction. This chain is Acetate kinase, found in Carboxydothermus hydrogenoformans (strain ATCC BAA-161 / DSM 6008 / Z-2901).